The primary structure comprises 252 residues: Accessory gland protein Acp32CD (252 aa).

The first 19 residues, 1–19 (MWRMRMRLLTGYLVLLALG), serve as a signal peptide directing secretion. The segment at 42 to 252 (PDGEGGTGVD…GAKEDDYEEM (211 aa)) is disordered. Positions 44–69 (GEGGTGVDGGGGGAGGGAAGPGGGTG) are enriched in gly residues. Composition is skewed to basic and acidic residues over residues 104–122 (AIGK…DSKD), 142–153 (SDSKDAKDRQDK), 159–171 (QEGK…HHSS), and 209–225 (NGAR…KEVA).

In terms of tissue distribution, seminal fluid.

The protein resides in the secreted. In terms of biological role, responsible for physiological and behavioral changes in mated female flies. The protein is Accessory gland protein Acp32CD (Acp32CD) of Drosophila melanogaster (Fruit fly).